We begin with the raw amino-acid sequence, 489 residues long: Glutamate--tRNA ligase (489 aa).

The short motif at 11–21 is the 'HIGH' region element; that stretch reads PSPTGHLHIGN. Residues 252–256 carry the 'KMSKS' region motif; that stretch reads KLSKR. Lys-255 is an ATP binding site.

The protein belongs to the class-I aminoacyl-tRNA synthetase family. Glutamate--tRNA ligase type 1 subfamily. As to quaternary structure, monomer.

It is found in the cytoplasm. The enzyme catalyses tRNA(Glu) + L-glutamate + ATP = L-glutamyl-tRNA(Glu) + AMP + diphosphate. In terms of biological role, catalyzes the attachment of glutamate to tRNA(Glu) in a two-step reaction: glutamate is first activated by ATP to form Glu-AMP and then transferred to the acceptor end of tRNA(Glu). The chain is Glutamate--tRNA ligase from Oceanobacillus iheyensis (strain DSM 14371 / CIP 107618 / JCM 11309 / KCTC 3954 / HTE831).